A 64-amino-acid polypeptide reads, in one-letter code: Hypoxia-inducible lipid droplet-associated protein (64 aa).

Residues 1–37 (MKFMLNLYVLGIMLTLLSIFVRVMESLGGLLESPLPG) form a required for targeting to lipid droplets region. The chain crosses the membrane as a helical span at residues 7–24 (LYVLGIMLTLLSIFVRVM). A compositionally biased stretch (polar residues) spans 42-51 (TRGQLANTQP). The segment at 42-64 (TRGQLANTQPPKGLPDHPSRGVQ) is disordered. Residues 55 to 64 (LPDHPSRGVQ) are compositionally biased toward basic and acidic residues.

The protein resides in the lipid droplet. The protein localises to the secreted. It is found in the membrane. In terms of biological role, increases intracellular lipid accumulation. Stimulates expression of cytokines including IL6, MIF and VEGFA. Enhances cell growth and proliferation. The polypeptide is Hypoxia-inducible lipid droplet-associated protein (Hilpda) (Mus musculus (Mouse)).